Here is a 178-residue protein sequence, read N- to C-terminus: uncharacterized protein (178 aa).

The next 2 membrane-spanning stretches (helical) occupy residues 6 to 26 and 154 to 174; these read AIFG…VSGL and KELV…AMLI.

Its subcellular location is the cell membrane. This is an uncharacterized protein from Methanocaldococcus jannaschii (strain ATCC 43067 / DSM 2661 / JAL-1 / JCM 10045 / NBRC 100440) (Methanococcus jannaschii).